The chain runs to 78 residues: TP53-regulated inhibitor of apoptosis 1 (78 aa).

The stretch at 1 to 52 (MNSVGEECTDMKREYDQCFNRWFAEKFLKGECSGDPCTELFRRYRDCVQKAI) forms a coiled coil. A CHCH domain is found at 5–55 (GEECTDMKREYDQCFNRWFAEKFLKGECSGDPCTELFRRYRDCVQKAIKDK). 2 short sequence motifs (cx9C motif) span residues 8–18 (CTDMKREYDQC) and 37–47 (CTELFRRYRDC). Disulfide bonds link cysteine 8/cysteine 47 and cysteine 18/cysteine 37.

It belongs to the TRIAP1/MDM35 family. In terms of assembly, monomer. Forms a complex with prelid1 in the mitochondrion intermembrane space. Interacts with prelid3a. Expressed in the developing pronephros.

The protein localises to the mitochondrion. Its subcellular location is the mitochondrion intermembrane space. It carries out the reaction a 1,2-diacyl-sn-glycero-3-phosphate(in) = a 1,2-diacyl-sn-glycero-3-phosphate(out). Involved in the modulation of the mitochondrial apoptotic pathway by ensuring the accumulation of cardiolipin (CL) in mitochondrial membranes. The triap1:prelid1 complex probably functions as a phosphatidic acid (PA) transporter across the mitochondrion intermembrane space to provide PA for cardiolipin CL synthesis in the inner membrane. Likewise, the triap1:prelid3a complex mediates the transfer of phosphatidic acid (PA) between liposomes (in vitro) and probably functions as a PA transporter across the mitochondrion intermembrane space (in vivo). Mediates cell survival by inhibiting activation of caspase-9 which prevents induction of apoptosis. Required for pronephros development; probably involved at an early stage in the formation of pronephric components derived from the somatic layer. This is TP53-regulated inhibitor of apoptosis 1 from Xenopus tropicalis (Western clawed frog).